We begin with the raw amino-acid sequence, 453 residues long: GTPase Der (453 aa).

EngA-type G domains lie at 3–167 (PIIV…INSK) and 188–361 (VKIA…HTSQ). Residues 9–16 (GRTNVGKS), 57–61 (DTAGI), 119–122 (NKID), 194–201 (GKPNVGKS), 241–245 (DTAGM), and 306–309 (NKCD) contribute to the GTP site. Positions 362-446 (KKIKTSQVMK…PIKIQFKETM (85 aa)) constitute a KH-like domain.

This sequence belongs to the TRAFAC class TrmE-Era-EngA-EngB-Septin-like GTPase superfamily. EngA (Der) GTPase family. As to quaternary structure, associates with the 50S ribosomal subunit.

Its function is as follows. GTPase that plays an essential role in the late steps of ribosome biogenesis. This is GTPase Der from Buchnera aphidicola subsp. Schizaphis graminum (strain Sg).